Consider the following 685-residue polypeptide: Tripartite terminase subunit 1 (685 aa).

The C3H1-type zinc finger occupies 173–201; sequence CWRCVGELMVLPNHGNPSTAEGTHVSCNH. 2 disordered regions span residues 231–254 and 394–423; these read EEKARPGGPEEGAVPGPGRPEAEG and LGRGEEEASRESPEVPRPAGAREPGPSGAL. The span at 395–407 shows a compositional bias: basic and acidic residues; the sequence is GRGEEEASRESPE. 619-626 contacts ATP; sequence YNKTWGRS.

The protein belongs to the herpesviridae TRM1 protein family. Associates with TRM2 and TRM3 to form the tripartite terminase complex. Interacts with portal protein.

The protein localises to the host nucleus. Component of the molecular motor that translocates viral genomic DNA in empty capsid during DNA packaging. Forms a tripartite terminase complex together with TRM2 and TRM3 in the host cytoplasm. Once the complex reaches the host nucleus, it interacts with the capsid portal vertex. This portal forms a ring in which genomic DNA is translocated into the capsid. TRM1 carries an endonuclease activity that plays an important role for the cleavage of concatemeric viral DNA into unit length genomes. This is Tripartite terminase subunit 1 from Epstein-Barr virus (strain B95-8) (HHV-4).